Here is a 272-residue protein sequence, read N- to C-terminus: MKRSAFFISDGTGITAETLGQSLLAQFENITFNKFTRPYIDSVEKARAMVQQINNAADKDDVRPIIFDTIVNQDIREILATSNGFMIDIFSTFLAPLEQELSSHSSYSVGKSHSIGHNSNYMERIEAVNFALDNDDGARTHYYDKADIILVGVSRCGKTPTCLYMAMQFGIRAANYPLTEDDMERLQLPAALKEHRSKLFGLTIDPDRLTAIRHERKPNSRYSSYAQCEFEVREVESLFRRENIPNINSTHFSVEEISAKVLVEKGVERRFK.

152-159 is an ADP binding site; sequence GVSRCGKT.

Belongs to the pyruvate, phosphate/water dikinase regulatory protein family. PSRP subfamily.

It carries out the reaction [pyruvate, water dikinase] + ADP = [pyruvate, water dikinase]-phosphate + AMP + H(+). The catalysed reaction is [pyruvate, water dikinase]-phosphate + phosphate + H(+) = [pyruvate, water dikinase] + diphosphate. Its function is as follows. Bifunctional serine/threonine kinase and phosphorylase involved in the regulation of the phosphoenolpyruvate synthase (PEPS) by catalyzing its phosphorylation/dephosphorylation. The polypeptide is Putative phosphoenolpyruvate synthase regulatory protein (Pseudomonas savastanoi pv. phaseolicola (strain 1448A / Race 6) (Pseudomonas syringae pv. phaseolicola (strain 1448A / Race 6))).